The chain runs to 338 residues: Fructose-1,6-bisphosphatase 1 (338 aa).

A2 bears the N-acetylalanine mark. AMP is bound by residues 18 to 22 and 28 to 32; these read VMEEG and TGEMT. Residues D69 and E98 each contribute to the Mg(2+) site. 113–114 contributes to the AMP binding site; it reads KY. 3 residues coordinate Mg(2+): D119, L121, and D122. 122–125 is a substrate binding site; that stretch reads DGSS. Residue R141 coordinates AMP. The residue at position 151 (K151) is an N6-succinyllysine. Substrate is bound by residues 213 to 216, 244 to 249, Y265, and 275 to 277; these read NEGY, RYVGSM, and KLR. Phosphotyrosine occurs at positions 216, 245, and 265. Position 281 (E281) interacts with Mg(2+).

Belongs to the FBPase class 1 family. Homotetramer. It depends on Mg(2+) as a cofactor.

It carries out the reaction beta-D-fructose 1,6-bisphosphate + H2O = beta-D-fructose 6-phosphate + phosphate. It functions in the pathway carbohydrate biosynthesis; gluconeogenesis. With respect to regulation, subject to complex allosteric regulation. The enzyme can assume an active R-state, or an inactive T-state. Intermediate conformations may exist. AMP acts as an allosteric inhibitor. AMP binding affects the turnover of bound substrate and not the affinity for substrate. Fructose 2,6-bisphosphate acts as a competitive inhibitor. Fructose 2,6-bisphosphate and AMP have synergistic effects. In terms of biological role, catalyzes the hydrolysis of fructose 1,6-bisphosphate to fructose 6-phosphate in the presence of divalent cations, acting as a rate-limiting enzyme in gluconeogenesis. Plays a role in regulating glucose sensing and insulin secretion of pancreatic beta-cells. Appears to modulate glycerol gluconeogenesis in liver. Important regulator of appetite and adiposity; increased expression of the protein in liver after nutrient excess increases circulating satiety hormones and reduces appetite-stimulating neuropeptides and thus seems to provide a feedback mechanism to limit weight gain. This chain is Fructose-1,6-bisphosphatase 1 (FBP1), found in Oryctolagus cuniculus (Rabbit).